The sequence spans 388 residues: Cystathionine gamma-synthase (388 aa).

Residue Lys-208 is modified to N6-(pyridoxal phosphate)lysine.

Belongs to the trans-sulfuration enzymes family. As to quaternary structure, homotetramer. Pyridoxal 5'-phosphate is required as a cofactor.

The protein localises to the cytoplasm. It catalyses the reaction O-succinyl-L-homoserine + L-cysteine = L,L-cystathionine + succinate + H(+). Catalyzes the formation of L-cystathionine from O-succinyl-L-homoserine (OSHS) and L-cysteine, via a gamma-replacement reaction. In the absence of thiol, catalyzes gamma-elimination to form 2-oxobutanoate, succinate and ammonia. This Mycobacterium leprae (strain TN) protein is Cystathionine gamma-synthase (metB).